The chain runs to 286 residues: Pantothenate synthetase (286 aa).

30–37 (MGALHEGH) provides a ligand contact to ATP. Residue H37 is the Proton donor of the active site. Q61 contributes to the (R)-pantoate binding site. Q61 lines the beta-alanine pocket. 147 to 150 (GEKD) provides a ligand contact to ATP. Q153 is a binding site for (R)-pantoate. ATP-binding positions include L176 and 184-187 (HSSR).

It belongs to the pantothenate synthetase family. Homodimer.

Its subcellular location is the cytoplasm. The enzyme catalyses (R)-pantoate + beta-alanine + ATP = (R)-pantothenate + AMP + diphosphate + H(+). Its pathway is cofactor biosynthesis; (R)-pantothenate biosynthesis; (R)-pantothenate from (R)-pantoate and beta-alanine: step 1/1. In terms of biological role, catalyzes the condensation of pantoate with beta-alanine in an ATP-dependent reaction via a pantoyl-adenylate intermediate. The sequence is that of Pantothenate synthetase from Bartonella tribocorum (strain CIP 105476 / IBS 506).